A 319-amino-acid polypeptide reads, in one-letter code: Protoheme IX farnesyltransferase (319 aa).

8 helical membrane passes run 59–79, 108–128, 131–151, 158–178, 183–203, 232–252, 254–274, and 299–319; these read IGLILATLVGGAFAAGSAGAF, EALVFSWLLGAAAIAILWFGA, LSAWLGLGAIFFYVVIYTIIL, NIVWGGAAGCFPVLIAWAAVT, WPAIILFMVIFLWTPPHYWPL, VVLYAWAMVACSLLMVPAGGA, WVYTVTAVLAGAWFLYESHAL, and LTLLFIALAVDPFVGPAVIGG.

It belongs to the UbiA prenyltransferase family. Protoheme IX farnesyltransferase subfamily.

The protein resides in the cell membrane. It catalyses the reaction heme b + (2E,6E)-farnesyl diphosphate + H2O = Fe(II)-heme o + diphosphate. The protein operates within porphyrin-containing compound metabolism; heme O biosynthesis; heme O from protoheme: step 1/1. Converts heme B (protoheme IX) to heme O by substitution of the vinyl group on carbon 2 of heme B porphyrin ring with a hydroxyethyl farnesyl side group. The protein is Protoheme IX farnesyltransferase of Pseudarthrobacter chlorophenolicus (strain ATCC 700700 / DSM 12829 / CIP 107037 / JCM 12360 / KCTC 9906 / NCIMB 13794 / A6) (Arthrobacter chlorophenolicus).